The following is a 388-amino-acid chain: Acetate kinase (388 aa).

Asn14 contributes to the Mg(2+) binding site. Lys21 is a binding site for ATP. Position 80 (Arg80) interacts with substrate. The active-site Proton donor/acceptor is Asp137. Residues 197–201, 271–273, and 319–323 each bind ATP; these read HLGNG, DFR, and GIGEH. Position 373 (Glu373) interacts with Mg(2+).

Belongs to the acetokinase family. As to quaternary structure, homodimer. Requires Mg(2+) as cofactor. The cofactor is Mn(2+).

Its subcellular location is the cytoplasm. It carries out the reaction acetate + ATP = acetyl phosphate + ADP. The protein operates within metabolic intermediate biosynthesis; acetyl-CoA biosynthesis; acetyl-CoA from acetate: step 1/2. Catalyzes the formation of acetyl phosphate from acetate and ATP. Can also catalyze the reverse reaction. The chain is Acetate kinase from Mycobacterium marinum (strain ATCC BAA-535 / M).